Reading from the N-terminus, the 123-residue chain is Small ribosomal subunit protein uS12 (123 aa).

The residue at position 89 (Asp-89) is a 3-methylthioaspartic acid. The tract at residues 104 to 123 is disordered; the sequence is TAGVKDRKQARSKYGAKRPK. Residues 113 to 123 are compositionally biased toward basic residues; that stretch reads ARSKYGAKRPK.

The protein belongs to the universal ribosomal protein uS12 family. Part of the 30S ribosomal subunit. Contacts proteins S8 and S17. May interact with IF1 in the 30S initiation complex.

With S4 and S5 plays an important role in translational accuracy. Its function is as follows. Interacts with and stabilizes bases of the 16S rRNA that are involved in tRNA selection in the A site and with the mRNA backbone. Located at the interface of the 30S and 50S subunits, it traverses the body of the 30S subunit contacting proteins on the other side and probably holding the rRNA structure together. The combined cluster of proteins S8, S12 and S17 appears to hold together the shoulder and platform of the 30S subunit. The sequence is that of Small ribosomal subunit protein uS12 from Neisseria gonorrhoeae (strain ATCC 700825 / FA 1090).